Reading from the N-terminus, the 303-residue chain is Recombination-associated protein RdgC (303 aa).

The protein belongs to the RdgC family.

The protein resides in the cytoplasm. Its subcellular location is the nucleoid. May be involved in recombination. This chain is Recombination-associated protein RdgC, found in Shewanella frigidimarina (strain NCIMB 400).